A 266-amino-acid chain; its full sequence is Small ribosomal subunit protein eS1 (266 aa).

The disordered stretch occupies residues 237 to 266; that stretch reads DGGSKTGEVGETGSKVDRPEGYEPPVQETV.

This sequence belongs to the eukaryotic ribosomal protein eS1 family. In terms of assembly, component of the small ribosomal subunit. Mature ribosomes consist of a small (40S) and a large (60S) subunit. The 40S subunit contains about 33 different proteins and 1 molecule of RNA (18S). The 60S subunit contains about 49 different proteins and 3 molecules of RNA (28S, 5.8S and 5S).

The protein localises to the cytoplasm. This is Small ribosomal subunit protein eS1 from Lysiphlebus testaceipes (Greenbugs aphid parastoid).